The sequence spans 413 residues: Multifunctional CCA protein (413 aa).

Residues Gly-8 and Arg-11 each coordinate ATP. Positions 8 and 11 each coordinate CTP. Mg(2+)-binding residues include Asp-21 and Asp-23. Arg-91, Arg-143, and Arg-146 together coordinate ATP. CTP is bound by residues Arg-91, Arg-143, and Arg-146. Residues 232 to 333 (TGVHVMMVID…VRLLERADAL (102 aa)) enclose the HD domain.

It belongs to the tRNA nucleotidyltransferase/poly(A) polymerase family. Bacterial CCA-adding enzyme type 1 subfamily. In terms of assembly, monomer. Can also form homodimers and oligomers. Requires Mg(2+) as cofactor. Ni(2+) serves as cofactor.

It catalyses the reaction a tRNA precursor + 2 CTP + ATP = a tRNA with a 3' CCA end + 3 diphosphate. It carries out the reaction a tRNA with a 3' CCA end + 2 CTP + ATP = a tRNA with a 3' CCACCA end + 3 diphosphate. Catalyzes the addition and repair of the essential 3'-terminal CCA sequence in tRNAs without using a nucleic acid template. Adds these three nucleotides in the order of C, C, and A to the tRNA nucleotide-73, using CTP and ATP as substrates and producing inorganic pyrophosphate. tRNA 3'-terminal CCA addition is required both for tRNA processing and repair. Also involved in tRNA surveillance by mediating tandem CCA addition to generate a CCACCA at the 3' terminus of unstable tRNAs. While stable tRNAs receive only 3'-terminal CCA, unstable tRNAs are marked with CCACCA and rapidly degraded. This Burkholderia mallei (strain NCTC 10247) protein is Multifunctional CCA protein.